Here is a 361-residue protein sequence, read N- to C-terminus: Homocitrate synthase (361 aa).

The region spanning 1–249 (MILDSTLREG…VKKYRLDKLY (249 aa)) is the Pyruvate carboxyltransferase domain. R8 contacts 2-oxoglutarate. E9 lines the Mg(2+) pocket. H68, R128, and T162 together coordinate 2-oxoglutarate. H188 and H190 together coordinate Mg(2+). Residue H282 is the Proton acceptor of the active site.

Belongs to the alpha-IPM synthase/homocitrate synthase family. Homocitrate synthase LYS20/LYS21 subfamily. Requires Mg(2+) as cofactor. Mn(2+) serves as cofactor.

It carries out the reaction acetyl-CoA + 2-oxoglutarate + H2O = (2R)-homocitrate + CoA + H(+). Its pathway is amino-acid biosynthesis; L-lysine biosynthesis via AAA pathway; L-alpha-aminoadipate from 2-oxoglutarate: step 1/5. Its function is as follows. Catalyzes the aldol-type condensation of 2-oxoglutarate with acetyl-CoA to yield homocitrate. Carries out the first step of the alpha-aminoadipate (AAA) lysine biosynthesis pathway. The sequence is that of Homocitrate synthase from Pyrococcus horikoshii (strain ATCC 700860 / DSM 12428 / JCM 9974 / NBRC 100139 / OT-3).